A 648-amino-acid chain; its full sequence is Activatory protein CHA4 (648 aa).

A compositionally biased stretch (pro residues) spans Met1–Leu10. The disordered stretch occupies residues Met1 to Pro37. Positions Thr11–Leu22 are enriched in low complexity. Residues Cys44–Cys70 constitute a DNA-binding region (zn(2)-C6 fungal-type). The disordered stretch occupies residues Ala140–Pro177. Phosphoserine occurs at positions 164 and 166.

The protein localises to the nucleus. Activates the CHA1 gene for L-serine dehydratase. Binds to the DNA sequence 5'-GVGGARAYRTRATTCCRC-3'. The polypeptide is Activatory protein CHA4 (CHA4) (Saccharomyces cerevisiae (strain ATCC 204508 / S288c) (Baker's yeast)).